The chain runs to 702 residues: 1,4-alpha-glucan-branching enzyme (702 aa).

Alanine 2 bears the N-acetylalanine mark. Substrate-binding positions include 62-63 and 91-93; these read NE and WAP. Tryptophan 107 is a binding site for (1,4-alpha-D-glucosyl)n. Position 118–121 (118–121) interacts with substrate; sequence DYGK. Lysine 143 contributes to the (1,4-alpha-D-glucosyl)n binding site. Tyrosine 173 bears the Phosphotyrosine mark. 333–336 is a substrate binding site; the sequence is EILR. Catalysis depends on aspartate 357, which acts as the Nucleophile. Catalysis depends on glutamate 412, which acts as the Proton donor.

This sequence belongs to the glycosyl hydrolase 13 family. GlgB subfamily. In terms of assembly, monomer.

It carries out the reaction Transfers a segment of a (1-&gt;4)-alpha-D-glucan chain to a primary hydroxy group in a similar glucan chain.. It functions in the pathway glycan biosynthesis; glycogen biosynthesis. In terms of biological role, glycogen-branching enzyme participates in the glycogen biosynthetic process along with glycogenin and glycogen synthase. Generates alpha-1,6-glucosidic branches from alpha-1,4-linked glucose chains, to increase solubility of the glycogen polymer. This is 1,4-alpha-glucan-branching enzyme (GBE1) from Homo sapiens (Human).